We begin with the raw amino-acid sequence, 241 residues long: Phosphatidylcholine synthase (241 aa).

Over 1-15 (MKIFNYKRVPYAEIR) the chain is Cytoplasmic. A helical membrane pass occupies residues 16–36 (AFSVHILTASGSFLAFLGVVA). Residues 37 to 41 (ASEHR) lie on the Periplasmic side of the membrane. The chain crosses the membrane as a helical span at residues 42 to 62 (FVDMFWWLGLALLVDGIDGPI). Topologically, residues 63 to 76 (ARKVRVKEVLPNWS) are cytoplasmic. The chain crosses the membrane as a helical span at residues 77 to 97 (GDTLDNIIDYVTYVLLPAFAL). At 98 to 100 (YQS) the chain is on the periplasmic side. The helical transmembrane segment at 101–121 (GMIGEPLSFVAAGMIVVSSAI) threads the bilayer. Topologically, residues 122–133 (YYADMGMKTDEY) are cytoplasmic. A helical transmembrane segment spans residues 134–154 (FFSGFPVVWNMVVFTLFVMDA). The Periplasmic segment spans residues 155 to 159 (SATTA). The helical transmembrane segment at 160–180 (MTVVTVSVFLTFLPINFLHPV) threads the bilayer. At 181–187 (RVKRLRP) the chain is on the cytoplasmic side. The helical transmembrane segment at 188-208 (LNLLVVAIWCALGGYALLMHF) threads the bilayer. Over 209-214 (ETPTWA) the chain is Periplasmic. A helical transmembrane segment spans residues 215-235 (VIAFVASGIYLYCIGGILQFF). Residues 236-241 (PSLGAK) lie on the Cytoplasmic side of the membrane.

It belongs to the CDP-alcohol phosphatidyltransferase class-I family. It depends on Mn(2+) as a cofactor.

Its subcellular location is the cell inner membrane. It catalyses the reaction a CDP-1,2-diacyl-sn-glycerol + choline = a 1,2-diacyl-sn-glycero-3-phosphocholine + CMP + H(+). Functionally, condenses choline with CDP-diglyceride to produce phosphatidylcholine and CMP. Affects motility, biofilm formation and virulence of this bacterium when there is a complete loss of phosphatidylcholine formation due to absence of both the synthase (pcs) and the methylation (pmtA) pathways. In Agrobacterium fabrum (strain C58 / ATCC 33970) (Agrobacterium tumefaciens (strain C58)), this protein is Phosphatidylcholine synthase.